The chain runs to 316 residues: Ribosomal RNA large subunit methyltransferase F (316 aa).

Belongs to the methyltransferase superfamily. METTL16/RlmF family.

The protein resides in the cytoplasm. The catalysed reaction is adenosine(1618) in 23S rRNA + S-adenosyl-L-methionine = N(6)-methyladenosine(1618) in 23S rRNA + S-adenosyl-L-homocysteine + H(+). Its function is as follows. Specifically methylates the adenine in position 1618 of 23S rRNA. The protein is Ribosomal RNA large subunit methyltransferase F of Pseudomonas putida (strain W619).